The chain runs to 162 residues: Precorrin-2 dehydrogenase (162 aa).

Residues 20 to 21 (SI) and 41 to 42 (PD) contribute to the NAD(+) site.

Belongs to the precorrin-2 dehydrogenase / sirohydrochlorin ferrochelatase family.

It carries out the reaction precorrin-2 + NAD(+) = sirohydrochlorin + NADH + 2 H(+). Its pathway is cofactor biosynthesis; adenosylcobalamin biosynthesis; sirohydrochlorin from precorrin-2: step 1/1. It functions in the pathway porphyrin-containing compound metabolism; siroheme biosynthesis; sirohydrochlorin from precorrin-2: step 1/1. Catalyzes the dehydrogenation of precorrin-2 to form sirohydrochlorin which is used as a precursor in both siroheme biosynthesis and in the anaerobic branch of adenosylcobalamin biosynthesis. The protein is Precorrin-2 dehydrogenase (sirC) of Bacillus subtilis (strain 168).